The sequence spans 693 residues: Glycine--tRNA ligase beta subunit (693 aa).

This sequence belongs to the class-II aminoacyl-tRNA synthetase family. In terms of assembly, tetramer of two alpha and two beta subunits.

Its subcellular location is the cytoplasm. The catalysed reaction is tRNA(Gly) + glycine + ATP = glycyl-tRNA(Gly) + AMP + diphosphate. In Shouchella clausii (strain KSM-K16) (Alkalihalobacillus clausii), this protein is Glycine--tRNA ligase beta subunit.